The sequence spans 457 residues: MALWGGRFSQAADQRFKQFNDSLRFDYRLAEQDIVGSIGWSKALVTVNVLSEQEQQQLEQALNALLVDVQADPEMILQSDAEDIHSWVEQRLIEKVGDLGKKLHTGRSRNDQVATDLKLWCKTQIAELLLSVRQLRQALVTTAEANQDAVMPGYTHLQRAQPVTFAHWCLAYHEMLARDESRLEDTLKRLDVSPLGCGALAGTAYPIDREQLAGWLGFASATRNSLDTVSDRDHVLELLSDASIGMIHLSRFAEDLIFFNSGEAAFVELSDRVTSGSSLMPQKKNPDALELIRGKCGRVQGALTGMMMTLKGLPLAYNKDMQEDKEGLFDALDTWHDCLMMAGLVLEGIQVKRPRCKEAAEQGYANSTELADYLVAKGVPFREAHHIVGEAVVEAIRQGKALEALPLADLQKFSAVIAEDVYPILALQSCLDKRAAQGGVSPQQVAKAISDAKQRLA.

It belongs to the lyase 1 family. Argininosuccinate lyase subfamily.

It localises to the cytoplasm. It carries out the reaction 2-(N(omega)-L-arginino)succinate = fumarate + L-arginine. It participates in amino-acid biosynthesis; L-arginine biosynthesis; L-arginine from L-ornithine and carbamoyl phosphate: step 3/3. This Pectobacterium carotovorum subsp. carotovorum (strain PC1) protein is Argininosuccinate lyase.